Consider the following 443-residue polypeptide: Chromosomal replication initiator protein DnaA (443 aa).

Residues 1–67 (MDAWSRSLER…RELLAHFAGF (67 aa)) form a domain I, interacts with DnaA modulators region. Residues 67-105 (FSDVFLEIGSRPRPVEAQNAPVSTPSAHVSSEPQVPFAG) form a domain II region. The domain III, AAA+ region stretch occupies residues 106 to 323 (NLDNHYTFAN…GALNTLTARA (218 aa)). ATP is bound by residues Gly151, Gly153, Lys154, and Thr155. Residues 324-443 (NFTGRAITTE…WDKLIRKLSE (120 aa)) form a domain IV, binds dsDNA region.

Belongs to the DnaA family. As to quaternary structure, oligomerizes as a right-handed, spiral filament on DNA at oriC.

Its subcellular location is the cytoplasm. Functionally, plays an essential role in the initiation and regulation of chromosomal replication. ATP-DnaA binds to the origin of replication (oriC) to initiate formation of the DNA replication initiation complex once per cell cycle. Binds the DnaA box (a 9 base pair repeat at the origin) and separates the double-stranded (ds)DNA. Forms a right-handed helical filament on oriC DNA; dsDNA binds to the exterior of the filament while single-stranded (ss)DNA is stabiized in the filament's interior. The ATP-DnaA-oriC complex binds and stabilizes one strand of the AT-rich DNA unwinding element (DUE), permitting loading of DNA polymerase. After initiation quickly degrades to an ADP-DnaA complex that is not apt for DNA replication. Binds acidic phospholipids. The chain is Chromosomal replication initiator protein DnaA from Stenotrophomonas maltophilia (strain K279a).